A 231-amino-acid polypeptide reads, in one-letter code: NADH-quinone oxidoreductase subunit C (231 aa).

The protein belongs to the complex I 30 kDa subunit family. In terms of assembly, NDH-1 is composed of 14 different subunits. Subunits NuoB, C, D, E, F, and G constitute the peripheral sector of the complex.

Its subcellular location is the cell membrane. It catalyses the reaction a quinone + NADH + 5 H(+)(in) = a quinol + NAD(+) + 4 H(+)(out). NDH-1 shuttles electrons from NADH, via FMN and iron-sulfur (Fe-S) centers, to quinones in the respiratory chain. The immediate electron acceptor for the enzyme in this species is believed to be a menaquinone. Couples the redox reaction to proton translocation (for every two electrons transferred, four hydrogen ions are translocated across the cytoplasmic membrane), and thus conserves the redox energy in a proton gradient. In Mycobacterium sp. (strain JLS), this protein is NADH-quinone oxidoreductase subunit C.